Consider the following 79-residue polypeptide: Protein Vpu (79 aa).

The Extracellular portion of the chain corresponds to Met1–Leu7. Residues Gly8–Arg28 traverse the membrane as a helical segment. The Cytoplasmic portion of the chain corresponds to Ile29–Val79. The tract at residues Asp48–Val79 is disordered. 2 positions are modified to phosphoserine; by host CK2: Ser53 and Ser57. Positions Ser53–Glu63 are enriched in acidic residues.

Belongs to the HIV-1 VPU protein family. In terms of assembly, homopentamer. Interacts with host CD4 and BRTC; these interactions induce proteasomal degradation of CD4. Interacts with host BST2; this interaction leads to the degradation of host BST2. Interacts with host FBXW11. Interacts with host AP1M1; this interaction plays a role in the mistrafficking and subsequent degradation of host BST2. Interacts with host RANBP2; this interaction allows Vpu to down-regulate host BLM sumoylation. Phosphorylated by host CK2. This phosphorylation is necessary for interaction with human BTRC and degradation of CD4.

It localises to the host membrane. With respect to regulation, ion channel activity is inhibited by hexamethylene amiloride in vitro. In terms of biological role, enhances virion budding by targeting host CD4 and Tetherin/BST2 to proteasome degradation. Degradation of CD4 prevents any unwanted premature interactions between viral Env and its host receptor CD4 in the endoplasmic reticulum. Degradation of antiretroviral protein Tetherin/BST2 is important for virion budding, as BST2 tethers new viral particles to the host cell membrane. Mechanistically, Vpu bridges either CD4 or BST2 to BTRC, a substrate recognition subunit of the Skp1/Cullin/F-box protein E3 ubiquitin ligase, induces their ubiquitination and subsequent proteasomal degradation. The alteration of the E3 ligase specificity by Vpu seems to promote the degradation of host IKBKB, leading to NF-kappa-B down-regulation and subsequent apoptosis. Acts as a viroporin that forms an oligomeric ion channel in membranes. Modulates the host DNA repair mechanisms to promote degradation of nuclear viral cDNA in cells that are already productively infected in order to suppress immune sensing and proviral hyper-integration (superinfection). Manipulates PML-NBs and modulates SUMOylation of host BLM protein thereby enhancing its DNA-end processing activity toward viral unintegrated linear DNA. Also inhibits RAD52-mediated homologous repair of viral cDNA, preventing the generation of dead-end circular forms of single copies of the long terminal repeat and permitting sustained nucleolytic attack. The protein is Protein Vpu of Pan troglodytes (Chimpanzee).